The chain runs to 158 residues: Protein Smg homolog (158 aa).

Belongs to the Smg family.

The protein is Protein Smg homolog of Herminiimonas arsenicoxydans.